The chain runs to 130 residues: Cholecystokinin (130 aa).

Residues Met-1 to Gly-20 form the signal peptide. Residues Gln-21 to Gln-60 constitute a propeptide that is removed on maturation. The residue at position 112 (Tyr-112) is a Sulfotyrosine. At Phe-118 the chain carries Phenylalanine amide. A propeptide spanning residues Ser-122 to Ser-130 is cleaved from the precursor. Sulfotyrosine is present on residues Tyr-126 and Tyr-128.

The protein belongs to the gastrin/cholecystokinin family. The precursor is cleaved by proteases to produce a number of active cholecystokinins. In terms of tissue distribution, expressed in brain, duodenum and small intestine.

It localises to the secreted. This peptide hormone induces gall bladder contraction and the release of pancreatic enzymes in the gut. Its function in the brain is not clear. This chain is Cholecystokinin, found in Trachemys scripta (Red-eared slider turtle).